A 199-amino-acid chain; its full sequence is Holliday junction branch migration complex subunit RuvA (199 aa).

The interval 1–65 is domain I; sequence MIGWLHGQII…EDALLLYGFL (65 aa). The domain II stretch occupies residues 66-144; it reads DKEERSLFRS…QFDGSVSDTF (79 aa). The flexible linker stretch occupies residues 144–148; it reads FQKQA. Residues 149–199 form a domain III region; that stretch reads GSTHSQQEAISALEALGYKPQEAWKVVNKIDNGNKSCEQLIREALQILSSR.

It belongs to the RuvA family. As to quaternary structure, homotetramer. Forms an RuvA(8)-RuvB(12)-Holliday junction (HJ) complex. HJ DNA is sandwiched between 2 RuvA tetramers; dsDNA enters through RuvA and exits via RuvB. An RuvB hexamer assembles on each DNA strand where it exits the tetramer. Each RuvB hexamer is contacted by two RuvA subunits (via domain III) on 2 adjacent RuvB subunits; this complex drives branch migration. In the full resolvosome a probable DNA-RuvA(4)-RuvB(12)-RuvC(2) complex forms which resolves the HJ.

It is found in the cytoplasm. In terms of biological role, the RuvA-RuvB-RuvC complex processes Holliday junction (HJ) DNA during genetic recombination and DNA repair, while the RuvA-RuvB complex plays an important role in the rescue of blocked DNA replication forks via replication fork reversal (RFR). RuvA specifically binds to HJ cruciform DNA, conferring on it an open structure. The RuvB hexamer acts as an ATP-dependent pump, pulling dsDNA into and through the RuvAB complex. HJ branch migration allows RuvC to scan DNA until it finds its consensus sequence, where it cleaves and resolves the cruciform DNA. The sequence is that of Holliday junction branch migration complex subunit RuvA from Legionella pneumophila (strain Paris).